The sequence spans 177 residues: Ribosome maturation factor RimP (177 aa).

The segment covering 153–171 (VEFNRKDTKNDNQTEHDNK) has biased composition (basic and acidic residues). The disordered stretch occupies residues 153–177 (VEFNRKDTKNDNQTEHDNKTEEEEA).

Belongs to the RimP family.

The protein resides in the cytoplasm. Functionally, required for maturation of 30S ribosomal subunits. This Streptomyces coelicolor (strain ATCC BAA-471 / A3(2) / M145) protein is Ribosome maturation factor RimP.